The chain runs to 434 residues: CCA tRNA nucleotidyltransferase 1, mitochondrial (434 aa).

A mitochondrion-targeting transit peptide spans Met-1–Phe-41. 2 residues coordinate ATP: Gly-64 and Arg-67. Gly-64 and Arg-67 together coordinate CTP. Mg(2+)-binding residues include Asp-77 and Asp-79. ATP is bound by residues Arg-151, Asp-194, Arg-197, Arg-200, and Arg-203. Residues Arg-151, Asp-194, Arg-197, Arg-200, and Arg-203 each coordinate CTP. Residue Ser-400 is modified to Phosphoserine. Lys-402 carries the N6-acetyllysine modification.

This sequence belongs to the tRNA nucleotidyltransferase/poly(A) polymerase family. As to quaternary structure, monomer, and homodimer. It depends on Mg(2+) as a cofactor.

Its subcellular location is the mitochondrion. It localises to the cytoplasm. It is found in the nucleus. The catalysed reaction is a tRNA precursor + 2 CTP + ATP = a tRNA with a 3' CCA end + 3 diphosphate. The enzyme catalyses a tRNA with a 3' CCA end + 2 CTP + ATP = a tRNA with a 3' CCACCA end + 3 diphosphate. Nucleotidyltransferase that catalyzes the addition and repair of the essential 3'-terminal CCA sequence in tRNAs, which is necessary for the attachment of amino acids to the 3' terminus of tRNA molecules, using CTP and ATP as substrates. tRNA 3'-terminal CCA addition is required both for tRNA processing and repair. Promotes tRNA repair and recycling downstream of the ribosome-associated quality control (RQC) pathway by mediating addition of the tRNA 3'-terminal CCA following cleavage by ANKZF1 and repair by ELAC1. Also involved in tRNA surveillance by mediating tandem CCA addition to generate a CCACCA at the 3' terminus of unstable tRNAs and tRNA-like transcripts. While stable tRNAs receive only 3'-terminal CCA, unstable tRNAs beginning with GG are marked with CCACCA and rapidly degraded. The structural flexibility of RNA controls the choice between CCA versus CCACCA addition: following the first CCA addition cycle, nucleotide-binding to the active site triggers a clockwise screw motion, producing torque on the RNA. This ejects stable RNAs, whereas unstable RNAs are refolded while bound to the enzyme and subjected to a second CCA catalytic cycle. In Mus musculus (Mouse), this protein is CCA tRNA nucleotidyltransferase 1, mitochondrial (Trnt1).